Here is a 56-residue protein sequence, read N- to C-terminus: uncharacterized protein (56 aa).

Residues methionine 6–leucine 26 traverse the membrane as a helical segment.

Its subcellular location is the membrane. This is an uncharacterized protein from Dictyostelium discoideum (Social amoeba).